Consider the following 353-residue polypeptide: Deoxyhypusine synthase (353 aa).

Residues 90–94 (SNLIS), 116–118 (TAG), Glu122, and Asp228 each bind NAD(+). 121–122 (EE) serves as a coordination point for spermidine. Spermidine is bound at residue Asp233. Residue Gly275 participates in NAD(+) binding. Residue His280 participates in spermidine binding. 300-301 (TA) is a binding site for NAD(+). Residues 306 to 308 (GSD) and 315 to 321 (EAVSWGK) contribute to the spermidine site. Lys321 functions as the Nucleophile in the catalytic mechanism. 334–335 (EA) is a binding site for NAD(+).

It belongs to the deoxyhypusine synthase family. Homotetramer. NAD(+) is required as a cofactor.

The catalysed reaction is [eIF5A protein]-L-lysine + spermidine = [eIF5A protein]-deoxyhypusine + propane-1,3-diamine. It participates in protein modification; eIF5A hypusination. In terms of biological role, catalyzes the NAD-dependent oxidative cleavage of spermidine and the subsequent transfer of the butylamine moiety of spermidine to the epsilon-amino group of a specific lysine residue of the eIF-5A precursor protein to form the intermediate deoxyhypusine residue. This is Deoxyhypusine synthase (dys-1) from Neurospora crassa (strain ATCC 24698 / 74-OR23-1A / CBS 708.71 / DSM 1257 / FGSC 987).